Reading from the N-terminus, the 934-residue chain is Serine/threonine-protein kinase PknD (934 aa).

The region spanning 4–296 is the Protein kinase domain; the sequence is YELIRLIGKG…ELRQALQPYL (293 aa). ATP-binding positions include 10 to 18 and K33; that span reads IGKGGMGEV. D138 functions as the Proton acceptor in the catalytic mechanism.

Belongs to the protein kinase superfamily. Ser/Thr protein kinase family. Interacts with Pkn1. Post-translationally, autophosphorylated on serine and threonine residues.

The enzyme catalyses L-seryl-[protein] + ATP = O-phospho-L-seryl-[protein] + ADP + H(+). It carries out the reaction L-threonyl-[protein] + ATP = O-phospho-L-threonyl-[protein] + ADP + H(+). Its function is as follows. Together with the serine/threonine kinase Pkn1, may play a role in the specific interactions with host proteins during intracellular growth. Autophosphorylates and also phosphorylates Pkn1. This Chlamydia trachomatis serovar D (strain ATCC VR-885 / DSM 19411 / UW-3/Cx) protein is Serine/threonine-protein kinase PknD.